A 1761-amino-acid chain; its full sequence is 6-methylsalicylic acid synthase AOL_s00215g283 (1761 aa).

A Ketosynthase family 3 (KS3) domain is found at 18–443; that stretch reads QDDIAIIGMA…GTVAHAVIEQ (426 aa). Catalysis depends on for beta-ketoacyl synthase activity residues Cys-190, His-325, and His-367. A malonyl-CoA:ACP transacylase (MAT) domain region spans residues 554-870; the sequence is VWVFSGHGAH…ALGKLHCHGA (317 aa). The For malonyltransferase activity role is filled by Ser-641. Positions 918 to 1038 are N-terminal hotdog fold; the sequence is HVLLGAKHQV…GHVANNEWSK (121 aa). Residues 918 to 1187 form a dehydratase (DH) domain region; it reads HVLLGAKHQV…NGMRFSAVEG (270 aa). The 274-residue stretch at 918 to 1191 folds into the PKS/mFAS DH domain; the sequence is HVLLGAKHQV…FSAVEGTPGA (274 aa). His-950 serves as the catalytic Proton acceptor; for dehydratase activity. Residues 1050-1191 are C-terminal hotdog fold; sequence LPSVKPSFAT…FSAVEGTPGA (142 aa). Asp-1113 (proton donor; for dehydratase activity) is an active-site residue. The segment at 1399-1587 is ketoreductase (KR) domain; the sequence is GTYLITGGLG…IVSFLWTSWN (189 aa). The interval 1654-1680 is disordered; the sequence is PRKRAESSGTEAVSKGEVSEKAPVPKS. In terms of domain architecture, Carrier spans 1686–1761; sequence EYLQNAISEC…HLVKWFEEKI (76 aa). Residue Ser-1721 is modified to O-(pantetheine 4'-phosphoryl)serine.

It catalyses the reaction 3 malonyl-CoA + acetyl-CoA + NADPH + 3 H(+) = 6-methylsalicylate + 3 CO2 + NADP(+) + 4 CoA + H2O. Its pathway is secondary metabolite biosynthesis; terpenoid biosynthesis. Its function is as follows. 6-methylsalicylic acid synthase; part of the gene cluster that mediates the biosynthesis of sesquiterpenyl epoxy-cyclohexenoids (SECs) such as anthrobotrisins and arthrosporols, metabolites that possess a novel hybrid carbon skeleton consisting of a polyketide-derived epoxycyclohexenol combined with a terpenoid-derived monocyclic sesquiterpenol substructure (PKS-PTS hybrid). The SEC pathway plays an important role for fungal soil colonization via decreasing fungal nematode-capturing ability. Within the pathway, the polyketide synthase (PKS) AOL_s00215g283 catalyzes the biosynthesis of 6-methylsalicylic acid (6-MSA) via condensation of 1 acetate and 3 malonate units. AOL_s00215g283 performs a series of programmed reactions including Claisen condensation, dehydration, reduction, and cyclization to yield 6-MSA. The pathway begins with the biosynthesis of 6-methylsalicylic acid (6-MSA), the first precursor of the polyketide-derived epoxycyclohexenol in arthrosporols, by the polyketide synthase (PKS) AOL_s00215g283. The 6-methylsalicylic acid decarboxylase AOL_s00215g281 then catalyzes the decarboxylation of 6-methylsalicylic acid to yield m-cresol. The cytochrome P450 monooxygenase AOL_s00215g282 further oxidizes m-cresol to yield toluquinol. With the assistance of the oxidoreductase AOL_s00215g277, the polyprenyl transferase AOL_s00215g276 catalyzes the farnesylation of toluquinol to produce farnesyl hydroquinone, the hybrid precursor for biosynthesis of SECs. Farnesyl hydroquinone undergoes epoxidation and then subsequent dehydrogenation to form farnesyl epoxy-quinone, the first and simplest SEC. The cytochrome P450 monooxygenase AOL_s00215g278 and the FAD-dependent monooxygenase AOL_s00215g279 might be involved in the oxygenation of the phenol moiety, most likely in the epoxy formation. The cytochrome P450 monooxygenases AOL_s00215g274 and AOL_s00215g280 are involved in specific regional ketone reductions at respectively C-4 and C-1 of farnesyl epoxy-quinone PubMed:33823587. This is 6-methylsalicylic acid synthase AOL_s00215g283 from Arthrobotrys oligospora (strain ATCC 24927 / CBS 115.81 / DSM 1491) (Nematode-trapping fungus).